A 375-amino-acid polypeptide reads, in one-letter code: MAKTKQQKSKPKKQPHQKQGKDCDLSQFRAQLDALGLKIIQVTADGNCFFRAIADQLEGNEDEHNKYRNMIVLYIVKNREMFEPFIEDDVPFEDYCKTMDDDGTWAGNMELQAASLVTRSNICIHRNMSPRWYIRNFEDTRTRMIHLSYHDGEHYNSVRSKEDACGGPARPVVIEADAKVSAASKQAKATESKSKNKADKCHVNAGAIKVVMSGSCCDNTEKAEQVLLQVNGDVDAAIEFLIADQGMESLTENDTETASASDTINPKHASDSPMENTEQAREELIEEESASGNNSETVQAKCTTQTDDKKIPRNKTCPCGSKKKYKSCCGTATGRSSVKLLVSQTMESKKGRKNLRRGTSNEVEANAPDVGALCI.

Residues 1 to 18 are compositionally biased toward basic residues; it reads MAKTKQQKSKPKKQPHQK. Positions 1-23 are disordered; that stretch reads MAKTKQQKSKPKKQPHQKQGKDC. The OTU domain occupies 37–161; it reads LKIIQVTADG…GEHYNSVRSK (125 aa). The active site involves Asp45. Catalysis depends on Cys48, which acts as the Nucleophile. His154 is an active-site residue. Positions 202–250 constitute a UBA-like domain; the sequence is HVNAGAIKVVMSGSCCDNTEKAEQVLLQVNGDVDAAIEFLIADQGMESL. Polar residues-rich tracts occupy residues 251-264 and 290-305; these read TEND…SDTI and ASGN…CTTQ. The interval 251–306 is disordered; that stretch reads TENDTETASASDTINPKHASDSPMENTEQAREELIEEESASGNNSETVQAKCTTQT. The Nuclear localization signal signature appears at 308 to 315; it reads DKKIPRNK.

Belongs to the peptidase C85 family.

It is found in the nucleus. It catalyses the reaction Thiol-dependent hydrolysis of ester, thioester, amide, peptide and isopeptide bonds formed by the C-terminal Gly of ubiquitin (a 76-residue protein attached to proteins as an intracellular targeting signal).. Functionally, hydrolase that can remove conjugated ubiquitin from proteins in vitro and may therefore play an important regulatory role at the level of protein turnover by preventing degradation. Cysteine protease with a preference for 'Lys-63' over 'Lys-48' over 'Met-1' -linked ubiquitin (UB) tetramers as substrates. Also cleaves RUB-GST fusion. The chain is OVARIAN TUMOR DOMAIN-containing deubiquitinating enzyme 7 from Arabidopsis thaliana (Mouse-ear cress).